The chain runs to 267 residues: MRRIAVVGAAGRMGKTLIEAVQQAPGAGLTAAIDRPDSTLVGADAGELAALGRIGVPLSGDLAKVADEFDVLIDFTHPSVTLKNLAFCRKAGKAMIIGTTGFSAEEKQRLVEAGKDIPIVFAANFSIGVNLCLKLLDTAARVLGDEVDIEITEAHHRHKVDAPSGTALRMGEVVASALGRDLEKVAVYGREGQTGARDCQTIGFATIRAGDVVGDHTVLFAADGERVEITHKASSRMTFAKGAVRAAMWLDGKAPGLYDMQDVLGLH.

Residues 8–13 (GAAGRM) and aspartate 34 each bind NAD(+). Arginine 35 is an NADP(+) binding site. NAD(+)-binding positions include 98 to 100 (GTT) and 122 to 125 (AANF). Catalysis depends on histidine 155, which acts as the Proton donor/acceptor. Residue histidine 156 participates in (S)-2,3,4,5-tetrahydrodipicolinate binding. Catalysis depends on lysine 159, which acts as the Proton donor. A (S)-2,3,4,5-tetrahydrodipicolinate-binding site is contributed by 165–166 (GT).

It belongs to the DapB family.

The protein resides in the cytoplasm. It carries out the reaction (S)-2,3,4,5-tetrahydrodipicolinate + NAD(+) + H2O = (2S,4S)-4-hydroxy-2,3,4,5-tetrahydrodipicolinate + NADH + H(+). The enzyme catalyses (S)-2,3,4,5-tetrahydrodipicolinate + NADP(+) + H2O = (2S,4S)-4-hydroxy-2,3,4,5-tetrahydrodipicolinate + NADPH + H(+). Its pathway is amino-acid biosynthesis; L-lysine biosynthesis via DAP pathway; (S)-tetrahydrodipicolinate from L-aspartate: step 4/4. Functionally, catalyzes the conversion of 4-hydroxy-tetrahydrodipicolinate (HTPA) to tetrahydrodipicolinate. The protein is 4-hydroxy-tetrahydrodipicolinate reductase of Pseudomonas savastanoi pv. phaseolicola (strain 1448A / Race 6) (Pseudomonas syringae pv. phaseolicola (strain 1448A / Race 6)).